The chain runs to 74 residues: UPF0270 protein NT01EI_3666 (74 aa).

It belongs to the UPF0270 family.

The sequence is that of UPF0270 protein NT01EI_3666 from Edwardsiella ictaluri (strain 93-146).